Reading from the N-terminus, the 302-residue chain is S-adenosylmethionine sensor upstream of mTORC1 (302 aa).

S-adenosyl-L-homocysteine is bound by residues Arg73, Gly132, and Asp150. Positions 73, 132, 150, 151, 162, 163, and 196 each coordinate S-adenosyl-L-methionine. S-adenosyl-L-homocysteine contacts are provided by Asp162, Phe163, and Ser196.

It belongs to the BMT2/SAMTOR family.

Its function is as follows. S-adenosyl-L-methionine-binding protein. It is unclear whether this protein acts as a sensor of S-adenosyl-L-methionine to signal methionine sufficiency to mTORC1. Probably acts as a S-adenosyl-L-methionine-dependent methyltransferase. In Drosophila melanogaster (Fruit fly), this protein is S-adenosylmethionine sensor upstream of mTORC1.